We begin with the raw amino-acid sequence, 391 residues long: Phosphoglycerate kinase (391 aa).

Residues 21-23, Arg-36, 59-62, Arg-113, and Arg-146 each bind substrate; these read DLN and HLGR. Residues Lys-197, Glu-319, and 345–348 each bind ATP; that span reads GGDT.

It belongs to the phosphoglycerate kinase family. In terms of assembly, monomer.

It is found in the cytoplasm. The enzyme catalyses (2R)-3-phosphoglycerate + ATP = (2R)-3-phospho-glyceroyl phosphate + ADP. The protein operates within carbohydrate degradation; glycolysis; pyruvate from D-glyceraldehyde 3-phosphate: step 2/5. This chain is Phosphoglycerate kinase, found in Stenotrophomonas maltophilia (strain K279a).